Here is a 392-residue protein sequence, read N- to C-terminus: Speckle-type POZ protein-like B (392 aa).

The MATH domain maps to 31-161 (KFSYMWTINN…DDKLTLFCEV (131 aa)). The BTB domain occupies 200-267 (TDCSLFVGGQ…IYTGKAPNLE (68 aa)).

This sequence belongs to the Tdpoz family. In terms of assembly, homodimer. Heterodimer with SPOP. Component of cullin-RING-based BCR (BTB-CUL3-RBX1) E3 ubiquitin-protein ligase complexes containing homodimeric SPOPL or the heterodimer formed by SPOP and SPOPL.

The protein resides in the nucleus. It participates in protein modification; protein ubiquitination. Component of a cullin-RING-based BCR (BTB-CUL3-RBX1) E3 ubiquitin-protein ligase complex that mediates the ubiquitination and subsequent proteasomal degradation of target proteins, but with relatively low efficiency. In Danio rerio (Zebrafish), this protein is Speckle-type POZ protein-like B (spoplb).